The sequence spans 342 residues: Ribosomal RNA small subunit methyltransferase C (342 aa).

This sequence belongs to the methyltransferase superfamily. RsmC family. Monomer.

Its subcellular location is the cytoplasm. The enzyme catalyses guanosine(1207) in 16S rRNA + S-adenosyl-L-methionine = N(2)-methylguanosine(1207) in 16S rRNA + S-adenosyl-L-homocysteine + H(+). Functionally, specifically methylates the guanine in position 1207 of 16S rRNA in the 30S particle. The sequence is that of Ribosomal RNA small subunit methyltransferase C from Enterobacter sp. (strain 638).